A 480-amino-acid chain; its full sequence is Glycogen synthase (480 aa).

Residue Lys-15 participates in ADP-alpha-D-glucose binding.

This sequence belongs to the glycosyltransferase 1 family. Bacterial/plant glycogen synthase subfamily.

It carries out the reaction [(1-&gt;4)-alpha-D-glucosyl](n) + ADP-alpha-D-glucose = [(1-&gt;4)-alpha-D-glucosyl](n+1) + ADP + H(+). Its pathway is glycan biosynthesis; glycogen biosynthesis. Functionally, synthesizes alpha-1,4-glucan chains using ADP-glucose. The chain is Glycogen synthase from Granulibacter bethesdensis (strain ATCC BAA-1260 / CGDNIH1).